Consider the following 159-residue polypeptide: Ubiquitin-conjugating enzyme E2 variant 1B (159 aa).

One can recognise a UBC core domain in the interval 11–159 (PRNFRLLEEL…KGLVVKCCVM (149 aa)).

Belongs to the ubiquitin-conjugating enzyme family. Heterodimer with UBC35 or UBC36. In terms of tissue distribution, expressed in roots, shoots, leaves, stems and flowers, but not in pollen.

In terms of biological role, has no ubiquitin ligase activity on its own. The heterodimer with UBC catalyzes the synthesis of non-canonical poly-ubiquitin chains that are linked through 'Lys-63'. This type of poly-ubiquitination does not lead to protein degradation by the proteasome. Mediates transcriptional activation of target genes. May play a role in the control of progress through the cell cycle and differentiation. May play a role in the error-free DNA repair pathway and contributes to the survival of cells after DNA damage. The sequence is that of Ubiquitin-conjugating enzyme E2 variant 1B (UEV1B) from Arabidopsis thaliana (Mouse-ear cress).